Here is a 135-residue protein sequence, read N- to C-terminus: ATP synthase epsilon chain (135 aa).

The tract at residues 91-122 (EAQKQLSEAEQAWSKFDGQPNSPDKIKAQQAF) is disordered.

Belongs to the ATPase epsilon chain family. As to quaternary structure, F-type ATPases have 2 components, CF(1) - the catalytic core - and CF(0) - the membrane proton channel. CF(1) has five subunits: alpha(3), beta(3), gamma(1), delta(1), epsilon(1). CF(0) has three main subunits: a, b and c.

It localises to the cellular thylakoid membrane. Its function is as follows. Produces ATP from ADP in the presence of a proton gradient across the membrane. In Synechococcus sp. (strain RCC307), this protein is ATP synthase epsilon chain.